We begin with the raw amino-acid sequence, 185 residues long: Ribosome-recycling factor (185 aa).

The protein belongs to the RRF family.

Its subcellular location is the cytoplasm. Functionally, responsible for the release of ribosomes from messenger RNA at the termination of protein biosynthesis. May increase the efficiency of translation by recycling ribosomes from one round of translation to another. The chain is Ribosome-recycling factor from Shewanella sp. (strain ANA-3).